A 163-amino-acid chain; its full sequence is NAD(P)H-quinone oxidoreductase subunit I, chloroplastic (163 aa).

4Fe-4S ferredoxin-type domains are found at residues 55-84 (GRIHFEFDKCIACEVCVRVCPIDLPVVDWK) and 95-124 (LNYSIDFGICIFCGNCIEYCPTNCLSMTEE). [4Fe-4S] cluster is bound by residues Cys64, Cys67, Cys70, Cys74, Cys104, Cys107, Cys110, and Cys114.

The protein belongs to the complex I 23 kDa subunit family. In terms of assembly, NDH is composed of at least 16 different subunits, 5 of which are encoded in the nucleus. [4Fe-4S] cluster serves as cofactor.

The protein localises to the plastid. It is found in the chloroplast thylakoid membrane. It catalyses the reaction a plastoquinone + NADH + (n+1) H(+)(in) = a plastoquinol + NAD(+) + n H(+)(out). The catalysed reaction is a plastoquinone + NADPH + (n+1) H(+)(in) = a plastoquinol + NADP(+) + n H(+)(out). Functionally, NDH shuttles electrons from NAD(P)H:plastoquinone, via FMN and iron-sulfur (Fe-S) centers, to quinones in the photosynthetic chain and possibly in a chloroplast respiratory chain. The immediate electron acceptor for the enzyme in this species is believed to be plastoquinone. Couples the redox reaction to proton translocation, and thus conserves the redox energy in a proton gradient. The polypeptide is NAD(P)H-quinone oxidoreductase subunit I, chloroplastic (Glycine max (Soybean)).